The chain runs to 171 residues: Der GTPase-activating protein YihI (171 aa).

Disordered stretches follow at residues 1–99 (MKKP…QAEL) and 145–171 (LSYD…RGGN). Over residues 20-30 (TREELNQEARD) the composition is skewed to basic and acidic residues. Residues 31–40 (RKRLKKHRGH) are compositionally biased toward basic residues. A compositionally biased stretch (acidic residues) spans 147–160 (YDDDEEDDEEDEKQ).

It belongs to the YihI family. As to quaternary structure, interacts with Der.

Functionally, a GTPase-activating protein (GAP) that modifies Der/EngA GTPase function. May play a role in ribosome biogenesis. This Salmonella agona (strain SL483) protein is Der GTPase-activating protein YihI.